The sequence spans 335 residues: Glycerol-3-phosphate dehydrogenase [NAD(P)+] (335 aa).

Position 109 (lysine 109) interacts with NADPH. The sn-glycerol 3-phosphate site is built by lysine 109, glycine 141, and serine 143. Position 145 (alanine 145) interacts with NADPH. Sn-glycerol 3-phosphate contacts are provided by lysine 196, aspartate 249, serine 259, arginine 260, and asparagine 261. Lysine 196 (proton acceptor) is an active-site residue. An NADPH-binding site is contributed by arginine 260. Residue glutamate 283 coordinates NADPH.

Belongs to the NAD-dependent glycerol-3-phosphate dehydrogenase family.

Its subcellular location is the cytoplasm. The enzyme catalyses sn-glycerol 3-phosphate + NAD(+) = dihydroxyacetone phosphate + NADH + H(+). The catalysed reaction is sn-glycerol 3-phosphate + NADP(+) = dihydroxyacetone phosphate + NADPH + H(+). It functions in the pathway membrane lipid metabolism; glycerophospholipid metabolism. Functionally, catalyzes the reduction of the glycolytic intermediate dihydroxyacetone phosphate (DHAP) to sn-glycerol 3-phosphate (G3P), the key precursor for phospholipid synthesis. This chain is Glycerol-3-phosphate dehydrogenase [NAD(P)+], found in Mycoplasma mobile (strain ATCC 43663 / 163K / NCTC 11711) (Mesomycoplasma mobile).